A 93-amino-acid chain; its full sequence is UPF0175 protein AF_0100 (93 aa).

Belongs to the UPF0175 family.

This chain is UPF0175 protein AF_0100, found in Archaeoglobus fulgidus (strain ATCC 49558 / DSM 4304 / JCM 9628 / NBRC 100126 / VC-16).